Here is a 360-residue protein sequence, read N- to C-terminus: Dihydroorotate dehydrogenase (quinone) (360 aa).

Residues 66–70 and Thr90 each bind FMN; that span reads AGFDK. Lys70 is a binding site for substrate. A substrate-binding site is contributed by 115–119; the sequence is NRMGF. Asn143 and Asn176 together coordinate FMN. Asn176 is a substrate binding site. Ser179 functions as the Nucleophile in the catalytic mechanism. Asn181 serves as a coordination point for substrate. Positions 212 and 240 each coordinate FMN. Position 241 to 242 (241 to 242) interacts with substrate; that stretch reads NT. Residues Gly264, Gly293, and 314-315 contribute to the FMN site; that span reads YT.

Belongs to the dihydroorotate dehydrogenase family. Type 2 subfamily. In terms of assembly, monomer. Requires FMN as cofactor.

The protein resides in the cell membrane. It carries out the reaction (S)-dihydroorotate + a quinone = orotate + a quinol. Its pathway is pyrimidine metabolism; UMP biosynthesis via de novo pathway; orotate from (S)-dihydroorotate (quinone route): step 1/1. Functionally, catalyzes the conversion of dihydroorotate to orotate with quinone as electron acceptor. The protein is Dihydroorotate dehydrogenase (quinone) of Mycobacterium ulcerans (strain Agy99).